The following is a 1060-amino-acid chain: Carbamoyl phosphate synthase large chain (1060 aa).

Positions 1–400 are carboxyphosphate synthetic domain; that stretch reads MPRDESINKV…SLNKAIRSLD (400 aa). Residues arginine 127, arginine 167, glycine 173, glycine 174, glutamine 206, valine 208, glutamate 213, glycine 240, isoleucine 241, histidine 242, glutamine 283, and glutamate 297 each contribute to the ATP site. An ATP-grasp 1 domain is found at 131–326; that stretch reads DSFMKKLNEP…IAKIAAKIAV (196 aa). Mg(2+)-binding residues include glutamine 283, glutamate 297, and asparagine 299. Mn(2+)-binding residues include glutamine 283, glutamate 297, and asparagine 299. The oligomerization domain stretch occupies residues 401 to 539; that stretch reads IGADGFTETP…YGCYDLEDEV (139 aa). Positions 540–926 are carbamoyl phosphate synthetic domain; sequence EVSDRRKVLI…YKSQLSASMD (387 aa). The ATP-grasp 2 domain occupies 664–858; the sequence is TEVLNKLGIP…LAKMAARLMM (195 aa). ATP is bound by residues arginine 700, lysine 739, leucine 741, glutamate 746, glycine 771, valine 772, histidine 773, serine 774, glutamine 814, and glutamate 829. Residues glutamine 814, glutamate 829, and asparagine 831 each contribute to the Mg(2+) site. 3 residues coordinate Mn(2+): glutamine 814, glutamate 829, and asparagine 831. Residues 925–1060 enclose the MGS-like domain; the sequence is MDLLNEGKVF…VKSLDEYHGM (136 aa). The allosteric domain stretch occupies residues 927 to 1060; the sequence is LLNEGKVFIS…VKSLDEYHGM (134 aa).

The protein belongs to the CarB family. In terms of assembly, composed of two chains; the small (or glutamine) chain promotes the hydrolysis of glutamine to ammonia, which is used by the large (or ammonia) chain to synthesize carbamoyl phosphate. Tetramer of heterodimers (alpha,beta)4. It depends on Mg(2+) as a cofactor. Mn(2+) serves as cofactor.

It carries out the reaction hydrogencarbonate + L-glutamine + 2 ATP + H2O = carbamoyl phosphate + L-glutamate + 2 ADP + phosphate + 2 H(+). The catalysed reaction is hydrogencarbonate + NH4(+) + 2 ATP = carbamoyl phosphate + 2 ADP + phosphate + 2 H(+). It functions in the pathway amino-acid biosynthesis; L-arginine biosynthesis; carbamoyl phosphate from bicarbonate: step 1/1. The protein operates within pyrimidine metabolism; UMP biosynthesis via de novo pathway; (S)-dihydroorotate from bicarbonate: step 1/3. In terms of biological role, large subunit of the glutamine-dependent carbamoyl phosphate synthetase (CPSase). CPSase catalyzes the formation of carbamoyl phosphate from the ammonia moiety of glutamine, carbonate, and phosphate donated by ATP, constituting the first step of 2 biosynthetic pathways, one leading to arginine and/or urea and the other to pyrimidine nucleotides. The large subunit (synthetase) binds the substrates ammonia (free or transferred from glutamine from the small subunit), hydrogencarbonate and ATP and carries out an ATP-coupled ligase reaction, activating hydrogencarbonate by forming carboxy phosphate which reacts with ammonia to form carbamoyl phosphate. This chain is Carbamoyl phosphate synthase large chain, found in Methanothermobacter thermautotrophicus (strain ATCC 29096 / DSM 1053 / JCM 10044 / NBRC 100330 / Delta H) (Methanobacterium thermoautotrophicum).